A 453-amino-acid chain; its full sequence is HTH-type pyridoxine biosynthesis transcriptional regulator PdxR (453 aa).

The 69-residue stretch at 15 to 83 (TSIPTQLTEQ…RGSGTTINPD (69 aa)) folds into the HTH gntR-type domain. Residues 43–62 (SRSLSTQLGVSRGSVVTAYD) constitute a DNA-binding region (H-T-H motif).

In the C-terminal section; belongs to the class-I pyridoxal-phosphate-dependent aminotransferase family. Pyridoxal 5'-phosphate serves as cofactor.

In terms of biological role, may have a regulatory function in pyridoxine biosynthesis. Is said to also have an aminotransferase activity in valine biosynthesis as a double inactivation of ilvE and pdxR results in an auxotrophic requirement for valine. This chain is HTH-type pyridoxine biosynthesis transcriptional regulator PdxR (pdxR), found in Corynebacterium glutamicum (strain ATCC 13032 / DSM 20300 / JCM 1318 / BCRC 11384 / CCUG 27702 / LMG 3730 / NBRC 12168 / NCIMB 10025 / NRRL B-2784 / 534).